Here is a 304-residue protein sequence, read N- to C-terminus: Ribokinase (304 aa).

Residues 12-14 (NVD), 41-45 (GKGAN), and glutamate 142 each bind substrate. Residues asparagine 186 and 222-227 (TLGKQG) contribute to the ATP site. K(+) is bound by residues aspartate 248 and threonine 250. Residues 253–254 (GD) and asparagine 279 each bind ATP. Aspartate 254 is a binding site for substrate. Residue aspartate 254 is the Proton acceptor of the active site. Threonine 285, lysine 288, glycine 290, and serine 294 together coordinate K(+).

Belongs to the carbohydrate kinase PfkB family. Ribokinase subfamily. Homodimer. It depends on Mg(2+) as a cofactor.

Its subcellular location is the cytoplasm. The catalysed reaction is D-ribose + ATP = D-ribose 5-phosphate + ADP + H(+). The protein operates within carbohydrate metabolism; D-ribose degradation; D-ribose 5-phosphate from beta-D-ribopyranose: step 2/2. Its activity is regulated as follows. Activated by a monovalent cation that binds near, but not in, the active site. The most likely occupant of the site in vivo is potassium. Ion binding induces a conformational change that may alter substrate affinity. Functionally, catalyzes the phosphorylation of ribose at O-5 in a reaction requiring ATP and magnesium. The resulting D-ribose-5-phosphate can then be used either for sythesis of nucleotides, histidine, and tryptophan, or as a component of the pentose phosphate pathway. The protein is Ribokinase of Staphylococcus aureus (strain COL).